The sequence spans 264 residues: Tropomyosin Cha f 1.0101 (264 aa).

N-acetylmethionine is present on M1. Disordered stretches follow at residues 1 to 56 (MDAI…VENE) and 92 to 126 (IQLPEEDLERSEERLNTATTKLAEASQAADESERM). A coiled-coil region spans residues 1 to 264 (MDAIKKKMQA…RLEDELVNEK (264 aa)). Positions 12-45 (KLEKDNAMDRADTLEQQNKEANLRAEKTEEEIRA) are enriched in basic and acidic residues.

It belongs to the tropomyosin family. As to quaternary structure, homodimer. In terms of tissue distribution, expressed in muscle (at protein level). Expressed in claw muscles.

In terms of biological role, tropomyosin, in association with the troponin complex, plays a central role in the calcium dependent regulation of muscle contraction. The protein is Tropomyosin Cha f 1.0101 of Charybdis feriata (Crucifix crab).